Consider the following 90-residue polypeptide: Small ribosomal subunit protein bS20 (90 aa).

A disordered region spans residues 1 to 25 (MANSAQARKRARQAAKANSHNSALR).

The protein belongs to the bacterial ribosomal protein bS20 family.

In terms of biological role, binds directly to 16S ribosomal RNA. In Burkholderia orbicola (strain MC0-3), this protein is Small ribosomal subunit protein bS20.